The primary structure comprises 528 residues: ATP synthase subunit alpha 1 (528 aa).

Residue 177–184 (GDRQTGKT) coordinates ATP.

This sequence belongs to the ATPase alpha/beta chains family. In terms of assembly, F-type ATPases have 2 components, CF(1) - the catalytic core - and CF(0) - the membrane proton channel. CF(1) has five subunits: alpha(3), beta(3), gamma(1), delta(1), epsilon(1). CF(0) has three main subunits: a(1), b(2) and c(9-12). The alpha and beta chains form an alternating ring which encloses part of the gamma chain. CF(1) is attached to CF(0) by a central stalk formed by the gamma and epsilon chains, while a peripheral stalk is formed by the delta and b chains.

It localises to the cell inner membrane. It catalyses the reaction ATP + H2O + 4 H(+)(in) = ADP + phosphate + 5 H(+)(out). Functionally, produces ATP from ADP in the presence of a proton gradient across the membrane. The alpha chain is a regulatory subunit. The polypeptide is ATP synthase subunit alpha 1 (Pseudoalteromonas atlantica (strain T6c / ATCC BAA-1087)).